Reading from the N-terminus, the 202-residue chain is Glycolipid transfer protein 1 (202 aa).

A ganglioside GM3 (d18:1(4E)) is bound by residues Asp52, Asn56, Trp99, and His138.

Belongs to the GLTP family.

Its function is as follows. May be involved in glycolipids transfer. The chain is Glycolipid transfer protein 1 from Arabidopsis thaliana (Mouse-ear cress).